The sequence spans 1038 residues: Protein transport protein SEC24 A (1038 aa).

The tract at residues 1–247 (MGTENQGYPN…PPHTGGFAQR (247 aa)) is disordered. Residues 22 to 33 (SAPPPGIPPQSG) show a composition bias toward pro residues. Cys371, Cys374, Cys393, and Cys396 together coordinate Zn(2+). The segment at 371 to 396 (CRRCRTYVNPFVTFTDSGRKWRCNIC) is zinc finger-like.

Belongs to the SEC23/SEC24 family. SEC24 subfamily. In terms of assembly, component of the coat protein complex II (COPII), composed of at least five proteins: the Sec23/24 complex, the Sec13/31 complex and Sar1. Interacts with SEC221, SEC23E/SEC23A, SEC23B, SEC23G/SEC23C and SEC23F/SEC23D. (Microbial infection) Interacts with turnip mosaic virus (TuMV) 6K2 in COPII-coated vesicles. As to expression, mainly expressed in pollen, leaves, inflorescences, roots and stems, and, to a lower extent, in cotyledons, petioles and hypocotyls.

Its subcellular location is the cytoplasmic vesicle. The protein localises to the COPII-coated vesicle membrane. It localises to the endoplasmic reticulum membrane. The protein resides in the golgi apparatus membrane. It is found in the cytoplasm. Its subcellular location is the cytosol. Essential protein. Component of the coat protein complex II (COPII), that covers ER-derived vesicles involved in transport from the endoplasmic reticulum to the Golgi apparatus. COPII is composed of at least five proteins: the SEC23/24 complex, the SEC13/31 complex, and the protein SAR1. Acts in the cytoplasm to promote the transport of secretory, plasma membrane, and vacuolar proteins from the endoplasmic reticulum to the Golgi complex. Involved in maintaining the dynamic identity of organelles of the early secretory pathway. Regulates cell size patterning, and prevents CDKA;1-, DEK1- and ACR4-dependent endoreduplication and giant cells formation in sepals. Required for male gametophytes (pollen grains) development and transmission. Its function is as follows. (Microbial infection) Contributes to viral systemic infection of turnip mosaic virus (TuMV) by triggering the formation of host endoplasmic reticulum (ER)-derived viral vesicles that carry the viral RNA (vRNA) to plasmodesmata for cell-to-cell viral movement. The protein is Protein transport protein SEC24 A of Arabidopsis thaliana (Mouse-ear cress).